Here is a 101-residue protein sequence, read N- to C-terminus: Small ribosomal subunit protein uS14 (101 aa).

This sequence belongs to the universal ribosomal protein uS14 family. Part of the 30S ribosomal subunit. Contacts proteins S3 and S10.

Functionally, binds 16S rRNA, required for the assembly of 30S particles and may also be responsible for determining the conformation of the 16S rRNA at the A site. The sequence is that of Small ribosomal subunit protein uS14 from Cupriavidus metallidurans (strain ATCC 43123 / DSM 2839 / NBRC 102507 / CH34) (Ralstonia metallidurans).